A 170-amino-acid polypeptide reads, in one-letter code: Disulfide bond formation protein B (170 aa).

Over 1 to 14 the chain is Cytoplasmic; it reads MNDSTLALRRERRL. A helical membrane pass occupies residues 15-31; it reads LMLLGWVCIALLAGALY. Residues 32–49 are Periplasmic-facing; that stretch reads LQYVKNEDPCPLCIIQRY. Cys41 and Cys44 form a disulfide bridge. The chain crosses the membrane as a helical span at residues 50-64; that stretch reads FFAAIGIFAFLAAGI. The Cytoplasmic segment spans residues 65–71; sequence RNWRVIW. Residues 72–89 traverse the membrane as a helical segment; it reads VFELLIAIAAAGGVGTAA. The Periplasmic segment spans residues 90–144; that stretch reads RHLSIQMNPGFSCGFDTLQPIVDSLPPAQWFPGMFKVAGLCETVYPPIFGILLPG. Residues Cys102 and Cys130 are joined by a disulfide bond. Residues 145-163 traverse the membrane as a helical segment; the sequence is WALIGFAVILVAVASSLWR. Topologically, residues 164-170 are cytoplasmic; the sequence is HRRKLAG.

Belongs to the DsbB family.

The protein localises to the cell inner membrane. Its function is as follows. Required for disulfide bond formation in some periplasmic proteins. Acts by oxidizing the DsbA protein. This Burkholderia ambifaria (strain ATCC BAA-244 / DSM 16087 / CCUG 44356 / LMG 19182 / AMMD) (Burkholderia cepacia (strain AMMD)) protein is Disulfide bond formation protein B.